Reading from the N-terminus, the 559-residue chain is DNA ligase (559 aa).

An ATP-binding site is contributed by Glu247. The N6-AMP-lysine intermediate role is filled by Lys249. The ATP site is built by Arg254, Arg269, Glu299, Phe339, Arg414, and Lys420.

This sequence belongs to the ATP-dependent DNA ligase family. As to quaternary structure, monomer. Mg(2+) serves as cofactor.

The catalysed reaction is ATP + (deoxyribonucleotide)n-3'-hydroxyl + 5'-phospho-(deoxyribonucleotide)m = (deoxyribonucleotide)n+m + AMP + diphosphate.. The enzyme catalyses NAD(+) + (deoxyribonucleotide)n-3'-hydroxyl + 5'-phospho-(deoxyribonucleotide)m = (deoxyribonucleotide)n+m + AMP + beta-nicotinamide D-nucleotide.. DNA ligase that seals nicks in double-stranded DNA during DNA replication, DNA recombination and DNA repair. Can also use NAD, but less efficiently than ATP. In Thermococcus kodakarensis (strain ATCC BAA-918 / JCM 12380 / KOD1) (Pyrococcus kodakaraensis (strain KOD1)), this protein is DNA ligase.